The sequence spans 334 residues: Putative heme-binding peroxidase (334 aa).

H40 serves as the catalytic Proton acceptor. H169 provides a ligand contact to heme b. W185 serves as the catalytic Tryptophan radical intermediate.

The protein belongs to the peroxidase family. Cytochrome c peroxidase subfamily. Requires heme b as cofactor.

Functionally, destroys radicals which are normally produced within the cells and which are toxic to biological systems. The protein is Putative heme-binding peroxidase of Cryptococcus neoformans var. neoformans serotype D (strain JEC21 / ATCC MYA-565) (Filobasidiella neoformans).